The chain runs to 140 residues: Large-conductance mechanosensitive channel (140 aa).

3 consecutive transmembrane segments (helical) span residues 7-27, 30-50, and 64-84; these read EFAF…GAAF, IITS…FGTV, and GLFV…FLFV.

This sequence belongs to the MscL family. As to quaternary structure, homopentamer.

The protein resides in the cell membrane. Functionally, channel that opens in response to stretch forces in the membrane lipid bilayer. May participate in the regulation of osmotic pressure changes within the cell. The sequence is that of Large-conductance mechanosensitive channel from Staphylococcus carnosus (strain TM300).